A 465-amino-acid chain; its full sequence is Deoxyguanosinetriphosphate triphosphohydrolase-like protein (465 aa).

Residues 1 to 22 (MKWDKLLNDKRRRESGVTRSKN) are disordered. The HD domain occupies 63-252 (RLTHSMEVST…LEVADDIAYL (190 aa)).

This sequence belongs to the dGTPase family. Type 3 subfamily.

The protein is Deoxyguanosinetriphosphate triphosphohydrolase-like protein of Listeria monocytogenes serovar 1/2a (strain ATCC BAA-679 / EGD-e).